We begin with the raw amino-acid sequence, 100 residues long: UPF0251 protein swp_0615 (100 aa).

The protein belongs to the UPF0251 family.

The chain is UPF0251 protein swp_0615 from Shewanella piezotolerans (strain WP3 / JCM 13877).